The primary structure comprises 240 residues: MGHRISTQSRGKGGPTYRAPSHQYKAELKHFGSALETVRATVIDIEHDPARHTPIAVVKIEGKASDKKEYALITEGVGIGQELVWGPEATVVNGNSLPLSAIPTGVAVCNIEARPGDGGKFVRSSGVQAVIIGKSAGKVGVRMPSGKPKWFNEACLATVGLVAGGGRIDKPILKAGKQYHKMKTSATRWPRVRGVAMNVIDHPFGGGGHQHPGKPKTVARGASPGRKVGSVAARRTGYRR.

The span at 1–10 shows a compositional bias: polar residues; it reads MGHRISTQSR. Disordered stretches follow at residues 1 to 20 and 204 to 240; these read MGHR…YRAP and FGGG…GYRR.

It belongs to the universal ribosomal protein uL2 family. Part of the 50S ribosomal subunit. Forms a bridge to the 30S subunit in the 70S ribosome.

Functionally, one of the primary rRNA binding proteins. Required for association of the 30S and 50S subunits to form the 70S ribosome, for tRNA binding and peptide bond formation. It has been suggested to have peptidyltransferase activity; this is somewhat controversial. Makes several contacts with the 16S rRNA in the 70S ribosome. The chain is Large ribosomal subunit protein uL2 from Methanocorpusculum labreanum (strain ATCC 43576 / DSM 4855 / Z).